A 500-amino-acid chain; its full sequence is ATP synthase subunit alpha (500 aa).

Glycine 169–threonine 176 provides a ligand contact to ATP.

Belongs to the ATPase alpha/beta chains family. F-type ATPases have 2 components, CF(1) - the catalytic core - and CF(0) - the membrane proton channel. CF(1) has five subunits: alpha(3), beta(3), gamma(1), delta(1), epsilon(1). CF(0) has three main subunits: a(1), b(2) and c(9-12). The alpha and beta chains form an alternating ring which encloses part of the gamma chain. CF(1) is attached to CF(0) by a central stalk formed by the gamma and epsilon chains, while a peripheral stalk is formed by the delta and b chains.

The protein localises to the cell membrane. It carries out the reaction ATP + H2O + 4 H(+)(in) = ADP + phosphate + 5 H(+)(out). In terms of biological role, produces ATP from ADP in the presence of a proton gradient across the membrane. The alpha chain is a regulatory subunit. The polypeptide is ATP synthase subunit alpha (Clostridioides difficile (strain 630) (Peptoclostridium difficile)).